The sequence spans 272 residues: Cytochrome b-c1 complex subunit Rieske-1, mitochondrial (272 aa).

The N-terminal 60 residues, 1–60 (MLRVAGRRLFSVSQRSSTATSFVVSRDHTLSDGGGDSSSAPRSLPSADLSSYHRSLIRGF), are a transit peptide targeting the mitochondrion. The segment at 27–46 (DHTLSDGGGDSSSAPRSLPS) is disordered. At 61-109 (SSQVLAQGNEIGFGSEVPATVEAVKTPNSKIVYDDHNHERYPPGDPSKR) the chain is on the mitochondrial matrix side. Residues 110-132 (AFAYFVLSGGRFVYASVLRLLVL) traverse the membrane as a helical segment. Residues 133–272 (KLIVSMSASK…FLEENKLLIG (140 aa)) lie on the Mitochondrial intermembrane side of the membrane. The Rieske domain maps to 201–270 (VRVKNPEWLV…YSFLEENKLL (70 aa)). [2Fe-2S] cluster is bound by residues C215, H217, C234, and H237. A disulfide bridge connects residues C220 and C236.

It belongs to the Rieske iron-sulfur protein family. As to quaternary structure, component of the ubiquinol-cytochrome c oxidoreductase (cytochrome b-c1 complex, complex III, CIII), a multisubunit enzyme composed of 10 subunits. The complex is composed of 3 respiratory subunits cytochrome b (MT-CYB), cytochrome c1 (CYC1-1 or CYC1-2) and Rieske protein (UCR1-1 or UCR1-2), 2 core protein subunits MPPalpha1 (or MPPalpha2) and MPPB, and 5 low-molecular weight protein subunits QCR7-1 (or QCR7-2), UCRQ-1 (or UCRQ-2), QCR9, UCRY and probably QCR6-1 (or QCR6-2). The complex exists as an obligatory dimer and forms supercomplexes (SCs) in the inner mitochondrial membrane with NADH-ubiquinone oxidoreductase (complex I, CI), resulting in different assemblies (supercomplexes SCI(1)III(2) and SCI(2)III(4)). [2Fe-2S] cluster serves as cofactor.

Its subcellular location is the mitochondrion inner membrane. It catalyses the reaction a quinol + 2 Fe(III)-[cytochrome c](out) = a quinone + 2 Fe(II)-[cytochrome c](out) + 2 H(+)(out). Functionally, component of the ubiquinol-cytochrome c oxidoreductase, a multisubunit transmembrane complex that is part of the mitochondrial electron transport chain which drives oxidative phosphorylation. The respiratory chain contains 3 multisubunit complexes succinate dehydrogenase (complex II, CII), ubiquinol-cytochrome c oxidoreductase (cytochrome b-c1 complex, complex III, CIII) and cytochrome c oxidase (complex IV, CIV), that cooperate to transfer electrons derived from NADH and succinate to molecular oxygen, creating an electrochemical gradient over the inner membrane that drives transmembrane transport and the ATP synthase. The cytochrome b-c1 complex catalyzes electron transfer from ubiquinol to cytochrome c, linking this redox reaction to translocation of protons across the mitochondrial inner membrane, with protons being carried across the membrane as hydrogens on the quinol. In the process called Q cycle, 2 protons are consumed from the matrix, 4 protons are released into the intermembrane space and 2 electrons are passed to cytochrome c. The Rieske protein is a catalytic core subunit containing a [2Fe-2S] iron-sulfur cluster. It cycles between 2 conformational states during catalysis to transfer electrons from the quinol bound in the Q(0) site in cytochrome b to cytochrome c1. The chain is Cytochrome b-c1 complex subunit Rieske-1, mitochondrial from Arabidopsis thaliana (Mouse-ear cress).